A 307-amino-acid chain; its full sequence is MNHYKDFISNLIENLGSENVKTNELMKNHTSFKVGGPVDILVTPESYEQVQYVIKHSRGNNIPYFIMGNGSNLLVRDGGIRGLVIKFCKLNRIKIEDDKIIAQSGVLLSKVSNMAAKNNLEGLEFASGIPGSIGGALTMNAGAYNGEISQVIDSALVLDKSGEILNLSKEELELGYRTSSILKNGYVVLEAILKLSLGDSKNIYDRIKELTEKRKTKQPLEYPSAGSTFKRPQGYFAAKLIEESGLKGINVGDAEVSQKHSGFIINKGNASAKDILNVINIVQDTVKSKFDVELHTEVLIIGEDKLN.

The FAD-binding PCMH-type domain maps to 33 to 198 (KVGGPVDILV…LEAILKLSLG (166 aa)). Residue Arg177 is part of the active site. The active-site Proton donor is the Ser227. Residue Glu297 is part of the active site.

The protein belongs to the MurB family. Requires FAD as cofactor.

It localises to the cytoplasm. It catalyses the reaction UDP-N-acetyl-alpha-D-muramate + NADP(+) = UDP-N-acetyl-3-O-(1-carboxyvinyl)-alpha-D-glucosamine + NADPH + H(+). It functions in the pathway cell wall biogenesis; peptidoglycan biosynthesis. Its function is as follows. Cell wall formation. This Clostridium tetani (strain Massachusetts / E88) protein is UDP-N-acetylenolpyruvoylglucosamine reductase.